We begin with the raw amino-acid sequence, 124 residues long: ATP synthase epsilon chain (124 aa).

The protein belongs to the ATPase epsilon chain family. F-type ATPases have 2 components, CF(1) - the catalytic core - and CF(0) - the membrane proton channel. CF(1) has five subunits: alpha(3), beta(3), gamma(1), delta(1), epsilon(1). CF(0) has three main subunits: a, b and c.

It localises to the cell membrane. Produces ATP from ADP in the presence of a proton gradient across the membrane. This Corynebacterium efficiens (strain DSM 44549 / YS-314 / AJ 12310 / JCM 11189 / NBRC 100395) protein is ATP synthase epsilon chain.